The following is a 397-amino-acid chain: Serpin-Z7 (397 aa).

Ala2 is subject to N-acetylalanine. Positions 344-368 (GTKAGAATGDVIVDRSLPIRMDFVA) are RCL.

It belongs to the serpin family. As to expression, highly expressed in endosperm, at intermediate level in embryo and at lower levels in roots.

Inhibits chymotrypsin in vitro. This chain is Serpin-Z7 (PAZ7), found in Hordeum vulgare (Barley).